Consider the following 165-residue polypeptide: Ubiquitin-fold modifier-conjugating enzyme 1 (165 aa).

The active-site Glycyl thioester intermediate is the cysteine 116.

It belongs to the ubiquitin-conjugating enzyme family. UFC1 subfamily.

E2-like enzyme which forms an intermediate with UFM1 via a thioester linkage. This Drosophila mojavensis (Fruit fly) protein is Ubiquitin-fold modifier-conjugating enzyme 1.